Here is a 437-residue protein sequence, read N- to C-terminus: ATP-dependent protease ATPase subunit HslU (437 aa).

ATP contacts are provided by residues valine 18, 60 to 65, aspartate 250, glutamate 315, and arginine 387; that span reads GCGKTE.

This sequence belongs to the ClpX chaperone family. HslU subfamily. As to quaternary structure, a double ring-shaped homohexamer of HslV is capped on each side by a ring-shaped HslU homohexamer. The assembly of the HslU/HslV complex is dependent on binding of ATP.

It is found in the cytoplasm. Its function is as follows. ATPase subunit of a proteasome-like degradation complex; this subunit has chaperone activity. The binding of ATP and its subsequent hydrolysis by HslU are essential for unfolding of protein substrates subsequently hydrolyzed by HslV. HslU recognizes the N-terminal part of its protein substrates and unfolds these before they are guided to HslV for hydrolysis. The protein is ATP-dependent protease ATPase subunit HslU of Methylobacterium sp. (strain 4-46).